We begin with the raw amino-acid sequence, 134 residues long: Two-component response regulator ORR5 (134 aa).

The 118-residue stretch at 16 to 133 (HVLAVDDSSV…DVSRLCSRVL (118 aa)) folds into the Response regulatory domain. A 4-aspartylphosphate modification is found at D66.

The protein belongs to the ARR family. Type-A subfamily. In terms of processing, two-component system major event consists of a His-to-Asp phosphorelay between a sensor histidine kinase (HK) and a response regulator (RR). In plants, the His-to-Asp phosphorelay involves an additional intermediate named Histidine-containing phosphotransfer protein (HPt). This multistep phosphorelay consists of a His-Asp-His-Asp sequential transfer of a phosphate group between first a His and an Asp of the HK protein, followed by the transfer to a conserved His of the HPt protein and finally the transfer to an Asp in the receiver domain of the RR protein. Expressed in mature leaves and shoots, and at low levels in roots and flowers.

Functionally, functions as a response regulator involved in His-to-Asp phosphorelay signal transduction system. Phosphorylation of the Asp residue in the receiver domain activates the ability of the protein to promote the transcription of target genes. Type-A response regulators seem to act as negative regulators of the cytokinin signaling. The chain is Two-component response regulator ORR5 from Oryza sativa subsp. indica (Rice).